Reading from the N-terminus, the 720-residue chain is 1,4-alpha-glucan branching enzyme GlgB 2 (720 aa).

The active-site Nucleophile is Asp398. Residue Glu451 is the Proton donor of the active site.

The protein belongs to the glycosyl hydrolase 13 family. GlgB subfamily. As to quaternary structure, monomer.

It catalyses the reaction Transfers a segment of a (1-&gt;4)-alpha-D-glucan chain to a primary hydroxy group in a similar glucan chain.. It participates in glycan biosynthesis; glycogen biosynthesis. Functionally, catalyzes the formation of the alpha-1,6-glucosidic linkages in glycogen by scission of a 1,4-alpha-linked oligosaccharide from growing alpha-1,4-glucan chains and the subsequent attachment of the oligosaccharide to the alpha-1,6 position. This is 1,4-alpha-glucan branching enzyme GlgB 2 from Xanthomonas oryzae pv. oryzae (strain KACC10331 / KXO85).